The primary structure comprises 485 residues: Glutamate mutase epsilon subunit (485 aa).

L-glutamate is bound at residue Arg-100. Residue Asn-123 coordinates adenosylcob(III)alamin. L-glutamate is bound by residues 149–150 (KH) and Asp-171. 4 residues coordinate adenosylcob(III)alamin: Pro-180, Phe-297, Lys-326, and Glu-330.

Belongs to the methylaspartate mutase GlmE subunit family. In terms of assembly, heterotetramer composed of 2 epsilon subunits (GlmE) and 2 sigma subunits (GlmS). GlmE exists as a homodimer and GlmS as a monomer. Adenosylcob(III)alamin serves as cofactor.

It catalyses the reaction (2S,3S)-3-methyl-L-aspartate = L-glutamate. It participates in amino-acid degradation; L-glutamate degradation via mesaconate pathway; acetate and pyruvate from L-glutamate: step 1/4. Catalyzes the carbon skeleton rearrangement of L-glutamate to L-threo-3-methylaspartate ((2S,3S)-3-methylaspartate). This Fusobacterium nucleatum subsp. nucleatum (strain ATCC 25586 / DSM 15643 / BCRC 10681 / CIP 101130 / JCM 8532 / KCTC 2640 / LMG 13131 / VPI 4355) protein is Glutamate mutase epsilon subunit.